The following is a 341-amino-acid chain: Processive diacylglycerol beta-glycosyltransferase (341 aa).

This sequence belongs to the glycosyltransferase 2 family. Requires Mg(2+) as cofactor.

The protein resides in the cell membrane. The enzyme catalyses a 1,2-diacyl-sn-glycerol + UDP-alpha-D-glucose = a 1,2-diacyl-3-O-(beta-D-glucopyranosyl)-sn-glycerol + UDP + H(+). It carries out the reaction a 1,2-diacyl-sn-glycerol + UDP-alpha-D-galactose = a 1,2-diacyl-3-O-(beta-D-galactosyl)-sn-glycerol + UDP + H(+). It catalyses the reaction a 1,2-diacyl-3-O-(beta-D-galactosyl)-sn-glycerol + UDP-alpha-D-glucose = a 1,2-diacyl-3-O-[beta-D-glucopyranosyl-(1-&gt;6)-beta-D-galactopyranosyl]-sn-glycerol + UDP + H(+). The catalysed reaction is a 1,2-diacyl-3-O-(beta-D-galactosyl)-sn-glycerol + UDP-alpha-D-galactose = a 1,2-diacyl-3-O-[beta-D-galactosyl-(1-&gt;6)-beta-D-galactosyl]-sn-glycerol + UDP + H(+). With respect to regulation, activated by the negatively charged lipid phosphatidylglycerol (PG). Functionally, processive glycosyltransferase involved in the biosynthesis of both the non-bilayer-prone beta-monoglycosyldiacylglycerol and the bilayer-forming membrane lipid glucosyl-galactosyldiacylglycerol and digalactosyl-diacylglycerol. These components contribute to regulate the properties and stability of the membrane. Catalyzes sequentially the transfers of glucosyl or galactosyl residues from UDP-Glc or UDP-Gal to diacylglycerol (DAG) acceptor to form the corresponding beta-glycosyl-DAG (3-O-(beta-D-glycopyranosyl)-1,2-diacyl-sn-glycerol). Then, only beta-galactosyl-DAG (3-O-(beta-D-galactopyranosyl)-1,2-diacyl-sn-glycerol) can act as acceptor to give the beta-glycosyl-beta-galactosyl-DAG product (3-O-(beta-D-glycopyranosyl-(1-&gt;6)-D-galactopyranosyl)-1,2-diacyl-sn-glycerol). It can also use alpha-Gal-beta-Gal-DAG, ceramide (Cer) and beta-Gal-Cer as sugar acceptors. The enzyme is supposed to be mainly a galactosyltransferase, with higher glycosyltransferase activity for the addition of the second glycosyl on beta-Gal-DAG as acceptor. The main glycolipid produced in vivo is beta-Glc-beta-Gal-DAG with a beta-1,6 linkage. In Mycoplasma pneumoniae (strain ATCC 29342 / M129 / Subtype 1) (Mycoplasmoides pneumoniae), this protein is Processive diacylglycerol beta-glycosyltransferase.